A 423-amino-acid polypeptide reads, in one-letter code: Serine--tRNA ligase (423 aa).

230-232 is a binding site for L-serine; it reads TAE. 261–263 lines the ATP pocket; it reads RQE. Glu-284 lines the L-serine pocket. 348-351 contacts ATP; that stretch reads EISS. Ser-384 is a binding site for L-serine.

This sequence belongs to the class-II aminoacyl-tRNA synthetase family. Type-1 seryl-tRNA synthetase subfamily. In terms of assembly, homodimer. The tRNA molecule binds across the dimer.

It is found in the cytoplasm. The catalysed reaction is tRNA(Ser) + L-serine + ATP = L-seryl-tRNA(Ser) + AMP + diphosphate + H(+). It catalyses the reaction tRNA(Sec) + L-serine + ATP = L-seryl-tRNA(Sec) + AMP + diphosphate + H(+). It functions in the pathway aminoacyl-tRNA biosynthesis; selenocysteinyl-tRNA(Sec) biosynthesis; L-seryl-tRNA(Sec) from L-serine and tRNA(Sec): step 1/1. Functionally, catalyzes the attachment of serine to tRNA(Ser). Is also able to aminoacylate tRNA(Sec) with serine, to form the misacylated tRNA L-seryl-tRNA(Sec), which will be further converted into selenocysteinyl-tRNA(Sec). The sequence is that of Serine--tRNA ligase from Thermoanaerobacter pseudethanolicus (strain ATCC 33223 / 39E) (Clostridium thermohydrosulfuricum).